The chain runs to 1530 residues: Coiled-coil domain-containing protein 141 (1530 aa).

Phosphothreonine is present on Thr91. Coiled-coil stretches lie at residues 642–706 (VKNE…EALM), 758–783 (VKEKSQQLKDLIHFHQKQKERIQDYE), and 861–970 (SNVS…KTSD). A disordered region spans residues 1210–1241 (SPDDISLPPLPGSPESPLAPSDMEVEEPVSSS). Residues 1409 to 1530 (PNFSRLLSNV…VSLMYWLLTQ (122 aa)) form the Ig-like domain.

Interacts with DISC1. Interacts preferentially with phosphorylated forms of myosin regulatory light chain (MRLC). Interacts (via the N-terminal region) with HDAC6; inhibits the deacetylase activity of HDAC6. Interacts with KIBRA (via the C-terminal region); retains AMPAR in the cytosol after internalization. In terms of processing, ubiquitinated and degradated by the CDC20-APC/C pathway. During brain development, CDC20-APC/C complex degrades CCDC141 after centrosome translocation into the dilated area. CCDC141 is restabilized in the dilation until the centrosome enters the dilation, at which point it is once again immediately destabilized by CDC20-APC/C complex. The oscillatory regulation of CCDC141 protein is needed for proper cortical migration. Post-translationally, phosphorylation at Thr-91 by PLK1 affects CCDC141 degradation.

It is found in the cytoplasm. The protein localises to the cytoskeleton. Its subcellular location is the microtubule organizing center. The protein resides in the centrosome. In terms of biological role, plays a critical role in cortical radial and GnRH neurons migration during brain development. Regulates cortical radial migration by negatively controlling the activity of histone deacetylase 6 (HDAC6) and promotes centrosome maturation. CAMDI is required for dilation formation of cortical neurons during radial migration. Plays a critical role in learning and memory performance through regulation of AMPA-selective glutamate receptors (AMPARs) cell surface expression in competition with KIBRA. The polypeptide is Coiled-coil domain-containing protein 141 (CCDC141) (Homo sapiens (Human)).